Here is a 167-residue protein sequence, read N- to C-terminus: Large ribosomal subunit protein bL9 (167 aa).

The protein belongs to the bacterial ribosomal protein bL9 family.

Its function is as follows. Binds to the 23S rRNA. The protein is Large ribosomal subunit protein bL9 of Chlamydia muridarum (strain MoPn / Nigg).